A 105-amino-acid polypeptide reads, in one-letter code: Protein yippee-like At4g27740 (105 aa).

Residues 8 to 105 (PTYFCRNCEN…IEKLKLTKRY (98 aa)) form the Yippee domain. Residues cysteine 12, cysteine 15, cysteine 68, and cysteine 71 each contribute to the Zn(2+) site.

This sequence belongs to the yippee family.

This is Protein yippee-like At4g27740 from Arabidopsis thaliana (Mouse-ear cress).